Consider the following 186-residue polypeptide: Chromophore lyase CpcS/CpeS 1 (186 aa).

This sequence belongs to the CpcS/CpeS biliprotein lyase family.

Functionally, covalently attaches a chromophore to Cys residue(s) of phycobiliproteins. The polypeptide is Chromophore lyase CpcS/CpeS 1 (Synechocystis sp. (strain ATCC 27184 / PCC 6803 / Kazusa)).